The following is a 213-amino-acid chain: Thymidylate kinase (213 aa).

Gly-10–Thr-17 contributes to the ATP binding site.

It belongs to the thymidylate kinase family.

The catalysed reaction is dTMP + ATP = dTDP + ADP. Functionally, phosphorylation of dTMP to form dTDP in both de novo and salvage pathways of dTTP synthesis. This Enterobacter sp. (strain 638) protein is Thymidylate kinase.